The following is a 294-amino-acid chain: uncharacterized protein (294 aa).

Positions 1-32 (MSHLKDPTTQYYTGEYPKQKQPTPGIQAKMTP) are disordered. K39 bears the N6-acetyllysine mark. 53 to 77 (LVTGGDSGIGRAAAIAYAREGADVA) provides a ligand contact to NADP(+). Substrate is bound at residue S186. Y199 serves as the catalytic Proton acceptor.

This sequence belongs to the short-chain dehydrogenases/reductases (SDR) family.

This is an uncharacterized protein from Escherichia coli (strain K12).